We begin with the raw amino-acid sequence, 88 residues long: Large ribosomal subunit protein uL23c (88 aa).

This sequence belongs to the universal ribosomal protein uL23 family. Part of the 50S ribosomal subunit.

The protein resides in the plastid. It is found in the chloroplast. Binds to 23S rRNA. In Spirogyra maxima (Green alga), this protein is Large ribosomal subunit protein uL23c (rpl23).